We begin with the raw amino-acid sequence, 328 residues long: Glycerol-3-phosphate dehydrogenase [NAD(P)+] (328 aa).

NADPH contacts are provided by Trp-11, Arg-30, and Lys-103. Residues Lys-103, Gly-132, and Ser-134 each coordinate sn-glycerol 3-phosphate. NADPH is bound at residue Ala-136. 5 residues coordinate sn-glycerol 3-phosphate: Lys-187, Asp-240, Ser-250, Arg-251, and Asn-252. The active-site Proton acceptor is the Lys-187. Position 251 (Arg-251) interacts with NADPH. Residues Val-275 and Glu-277 each contribute to the NADPH site.

The protein belongs to the NAD-dependent glycerol-3-phosphate dehydrogenase family.

It localises to the cytoplasm. It carries out the reaction sn-glycerol 3-phosphate + NAD(+) = dihydroxyacetone phosphate + NADH + H(+). It catalyses the reaction sn-glycerol 3-phosphate + NADP(+) = dihydroxyacetone phosphate + NADPH + H(+). Its pathway is membrane lipid metabolism; glycerophospholipid metabolism. Its function is as follows. Catalyzes the reduction of the glycolytic intermediate dihydroxyacetone phosphate (DHAP) to sn-glycerol 3-phosphate (G3P), the key precursor for phospholipid synthesis. This Thiobacillus denitrificans (strain ATCC 25259 / T1) protein is Glycerol-3-phosphate dehydrogenase [NAD(P)+].